We begin with the raw amino-acid sequence, 1054 residues long: FERM, ARHGEF and pleckstrin domain-containing protein 2 (1054 aa).

The region spanning 44–324 (LHLRVKLLDN…EYHTFFRLLD (281 aa)) is the FERM domain. S389 and S439 each carry phosphoserine. Residues 421–527 (EFKDSSSSLT…GAGMDCEEPR (107 aa)) are disordered. Low complexity predominate over residues 468-492 (PGPGLSTKSPQPSPSSRKSPLSLSP). Positions 535-726 (EAYFIVKEIL…TEVTTTLQHI (192 aa)) constitute a DH domain. Residues 755–852 (EFIREGCLHK…WMLDLNSAIQ (98 aa)) enclose the PH 1 domain. Residues 856-894 (SGGDTAPALPGRTVCTRPPRSPNEVSLEQESEDDARGVR) form a disordered region. Residues 929-1026 (ENQLSGYLLR…WMEVIQGASS (98 aa)) enclose the PH 2 domain. The tract at residues 1029–1054 (GRAPSIVQDGPQPSSGLEGMVRGKEE) is disordered.

As to quaternary structure, interacts with PLXNA1. Interaction with PLXNA1 or PIP5K1C lowers its guanine nucleotide exchange activity. Dissociates from PLXNA1 when SEMA3A binds to the receptor. Interacts with PIP5K1C via its FERM domain. The interaction with PIP5K1C is enhanced by SEMA3A binding. Interacts with RAC1.

Its function is as follows. Functions as a guanine nucleotide exchange factor that activates RAC1. May have relatively low activity. Plays a role in the response to class 3 semaphorins and remodeling of the actin cytoskeleton. Plays a role in TNFSF11-mediated osteoclast differentiation, especially in podosome rearrangement and reorganization of the actin cytoskeleton. Regulates the activation of ITGB3, integrin signaling and cell adhesion. In Homo sapiens (Human), this protein is FERM, ARHGEF and pleckstrin domain-containing protein 2 (FARP2).